We begin with the raw amino-acid sequence, 363 residues long: tRNA N6-adenosine threonylcarbamoyltransferase (363 aa).

Residues His-121 and His-125 each coordinate Fe cation. Substrate-binding positions include 143–147 (LASGG), Asp-176, Gly-189, and Asn-287. Asp-315 is a binding site for Fe cation.

This sequence belongs to the KAE1 / TsaD family. Requires Fe(2+) as cofactor.

The protein resides in the cytoplasm. It catalyses the reaction L-threonylcarbamoyladenylate + adenosine(37) in tRNA = N(6)-L-threonylcarbamoyladenosine(37) in tRNA + AMP + H(+). Its function is as follows. Required for the formation of a threonylcarbamoyl group on adenosine at position 37 (t(6)A37) in tRNAs that read codons beginning with adenine. Is involved in the transfer of the threonylcarbamoyl moiety of threonylcarbamoyl-AMP (TC-AMP) to the N6 group of A37, together with TsaE and TsaB. TsaD likely plays a direct catalytic role in this reaction. The polypeptide is tRNA N6-adenosine threonylcarbamoyltransferase (Rhodopseudomonas palustris (strain TIE-1)).